The primary structure comprises 484 residues: Cysteine--tRNA ligase (484 aa).

A Zn(2+)-binding site is contributed by C29. Residues 31-41 (ITVYDYCHLGH) carry the 'HIGH' region motif. 3 residues coordinate Zn(2+): C215, H240, and E244. The short motif at 272–276 (KMSKS) is the 'KMSKS' region element. K275 lines the ATP pocket.

It belongs to the class-I aminoacyl-tRNA synthetase family. Monomer. Zn(2+) serves as cofactor.

The protein localises to the cytoplasm. The catalysed reaction is tRNA(Cys) + L-cysteine + ATP = L-cysteinyl-tRNA(Cys) + AMP + diphosphate. In Rippkaea orientalis (strain PCC 8801 / RF-1) (Cyanothece sp. (strain PCC 8801)), this protein is Cysteine--tRNA ligase.